The chain runs to 458 residues: Exodeoxyribonuclease 7 large subunit (458 aa).

It belongs to the XseA family. In terms of assembly, heterooligomer composed of large and small subunits.

It is found in the cytoplasm. It carries out the reaction Exonucleolytic cleavage in either 5'- to 3'- or 3'- to 5'-direction to yield nucleoside 5'-phosphates.. In terms of biological role, bidirectionally degrades single-stranded DNA into large acid-insoluble oligonucleotides, which are then degraded further into small acid-soluble oligonucleotides. The polypeptide is Exodeoxyribonuclease 7 large subunit (Yersinia enterocolitica serotype O:8 / biotype 1B (strain NCTC 13174 / 8081)).